The following is a 491-amino-acid chain: Pyruvate carboxylase subunit A (491 aa).

The region spanning 1–445 (MFSKILVANR…HTHFVDEYRR (445 aa)) is the Biotin carboxylation domain. Residues Lys-116, Glu-200, and His-235 each coordinate ATP. The region spanning 120–316 (KKLMKKAGVP…LVKEQIRVAS (197 aa)) is the ATP-grasp domain. Residue Arg-291 is part of the active site.

In terms of assembly, heterooctamer of four A and four B subunits. Mg(2+) is required as a cofactor. Requires Mn(2+) as cofactor. It depends on Co(2+) as a cofactor.

The catalysed reaction is hydrogencarbonate + pyruvate + ATP = oxaloacetate + ADP + phosphate + H(+). It functions in the pathway carbohydrate biosynthesis; gluconeogenesis. With respect to regulation, inhibited by ADP and alpha-ketoglutarate. In terms of biological role, pyruvate carboxylase catalyzes a 2-step reaction, involving the ATP-dependent carboxylation of the covalently attached biotin in the first step and the transfer of the carboxyl group to pyruvate in the second. This Methanothermobacter thermautotrophicus (strain ATCC 29096 / DSM 1053 / JCM 10044 / NBRC 100330 / Delta H) (Methanobacterium thermoautotrophicum) protein is Pyruvate carboxylase subunit A (pycA).